A 553-amino-acid chain; its full sequence is MAASKKAVLGPLVGAVDQGTSSTRFLVFNSRTAELLSHHQVEIKQEFPREGWVEQDPKEILHSVYECIEKTCEKLGQLNIGISNIKAIGVSNQRETTVVWDKITGEPLYNAVVWLDLRTQSTVESLSKRIPGNNNFVKSKTGLPLSTYFSAVKLRWLLDNVRKVQKAVEEKRALFGTIDSWLIWSLTGGVNGGVHCTDVTNASRTMLFNIHSLEWDKQLCEFFGIPMEILPHVRSSSEIYGLMKAGALEGVPISGCLGDQSAALVGQMCFQIGQAKNTYGTGCFLLCNTGHKCVFSDHGLLTTVAYKLGRDKPVYYALEGSVAIAGAVIRWLRDNLGIIKTSEEIEKLAKEVGTSYGCYFVPAFSGLYAPYWEPSARGIICGLTQFTNKCHIAFAALEAVCFQTREILDAMNRDCGIPLSHLQVDGGMTSNKILMQLQADILYIPVVKPLMPETTALGAAMAAGAAEGVDVWSLEPEDLSAVTMERFEPQINAEESEIRYSTWKKAVMKSMGWVTTQSPEGGDPSVFCSLPLGFFIVSSMAMLIGARYISGIP.

Position 20 (T20) interacts with substrate. R24 lines the ATP pocket. Substrate-binding residues include R94, Y148, and D259. ATP-binding positions include T281, G326, and 427 to 431; that span reads GMTSN.

The protein belongs to the FGGY kinase family.

Its subcellular location is the mitochondrion outer membrane. It is found in the cytoplasm. It carries out the reaction glycerol + ATP = sn-glycerol 3-phosphate + ADP + H(+). Its pathway is polyol metabolism; glycerol degradation via glycerol kinase pathway; sn-glycerol 3-phosphate from glycerol: step 1/1. Its function is as follows. May be involved in the regulation of glycerol uptake and metabolism. This chain is Glycerol kinase 3, found in Homo sapiens (Human).